Consider the following 269-residue polypeptide: Phosphatidylglycerol--prolipoprotein diacylglyceryl transferase (269 aa).

7 helical membrane-spanning segments follow: residues 10–30, 56–76, 91–111, 126–146, 172–192, 200–220, and 237–257; these read IAVS…LIGF, AIFY…ILFY, IWEG…AMFF, FLAP…FIGG, PSQL…LWFF, YCVS…VEFV, and EGQL…MAGL. A 1,2-diacyl-sn-glycero-3-phospho-(1'-sn-glycerol) is bound at residue R139.

It belongs to the Lgt family.

It is found in the cell inner membrane. The enzyme catalyses L-cysteinyl-[prolipoprotein] + a 1,2-diacyl-sn-glycero-3-phospho-(1'-sn-glycerol) = an S-1,2-diacyl-sn-glyceryl-L-cysteinyl-[prolipoprotein] + sn-glycerol 1-phosphate + H(+). Its pathway is protein modification; lipoprotein biosynthesis (diacylglyceryl transfer). In terms of biological role, catalyzes the transfer of the diacylglyceryl group from phosphatidylglycerol to the sulfhydryl group of the N-terminal cysteine of a prolipoprotein, the first step in the formation of mature lipoproteins. This is Phosphatidylglycerol--prolipoprotein diacylglyceryl transferase from Marinomonas sp. (strain MWYL1).